We begin with the raw amino-acid sequence, 107 residues long: Conantokin-R (107 aa).

A signal peptide spans 1 to 24; it reads MQLYTYLYLLVSLVTFYLILGTGT. Positions 25–80 are excised as a propeptide; the sequence is LGHGGALTERRSTDATALKPEPVLLQKSSARSTDDNGNDRLTQMKRILKKRGNKAR. Positions 26 to 64 are disordered; sequence GHGGALTERRSTDATALKPEPVLLQKSSARSTDDNGNDR. 4-carboxyglutamate occurs at positions 83, 84, 91, and 95. Residues Glu-91 and Glu-95 each coordinate a divalent metal cation. Cysteines 101 and 105 form a disulfide.

It belongs to the conotoxin B superfamily. The cofactor is Ca(2+). Requires Mg(2+) as cofactor. As to expression, expressed by the venom duct.

The protein resides in the secreted. In terms of biological role, conantokins inhibit N-methyl-D-aspartate (NMDA) receptors. This toxin is potent in the following order of preference: NR2B approximately NR2A/GRIN2A &gt; NR2C/GRIN2C &gt;&gt; NR2D/GRIN2D. Induces sleep-like symptoms in young mice. Is a highly potent anticonvulsant compound. This Conus radiatus (Rayed cone) protein is Conantokin-R.